Consider the following 282-residue polypeptide: NADH-ubiquinone oxidoreductase chain 2 (282 aa).

The next 7 membrane-spanning stretches (helical) occupy residues 17–37, 58–78, 87–107, 115–135, 166–186, 202–222, and 232–252; these read ILTN…VVFI, SLGL…IILL, FWIF…FLTF, ILLQ…LLIC, FSMF…VLLI, TTLV…IFSL, and FTLF…FWLI.

Belongs to the complex I subunit 2 family.

The protein localises to the mitochondrion inner membrane. It catalyses the reaction a ubiquinone + NADH + 5 H(+)(in) = a ubiquinol + NAD(+) + 4 H(+)(out). In terms of biological role, core subunit of the mitochondrial membrane respiratory chain NADH dehydrogenase (Complex I) that is believed to belong to the minimal assembly required for catalysis. Complex I functions in the transfer of electrons from NADH to the respiratory chain. The immediate electron acceptor for the enzyme is believed to be ubiquinone. In Caenorhabditis elegans, this protein is NADH-ubiquinone oxidoreductase chain 2.